The following is a 954-amino-acid chain: Glycine dehydrogenase (decarboxylating) (954 aa).

Lysine 704 carries the post-translational modification N6-(pyridoxal phosphate)lysine.

This sequence belongs to the GcvP family. As to quaternary structure, the glycine cleavage system is composed of four proteins: P, T, L and H. Pyridoxal 5'-phosphate serves as cofactor.

It catalyses the reaction N(6)-[(R)-lipoyl]-L-lysyl-[glycine-cleavage complex H protein] + glycine + H(+) = N(6)-[(R)-S(8)-aminomethyldihydrolipoyl]-L-lysyl-[glycine-cleavage complex H protein] + CO2. Its function is as follows. The glycine cleavage system catalyzes the degradation of glycine. The P protein binds the alpha-amino group of glycine through its pyridoxal phosphate cofactor; CO(2) is released and the remaining methylamine moiety is then transferred to the lipoamide cofactor of the H protein. This is Glycine dehydrogenase (decarboxylating) from Agrobacterium fabrum (strain C58 / ATCC 33970) (Agrobacterium tumefaciens (strain C58)).